The chain runs to 330 residues: Ketol-acid reductoisomerase (NADP(+)) (330 aa).

Residues 1-182 (MAVVYYDQDA…GATRAGVIET (182 aa)) enclose the KARI N-terminal Rossmann domain. Residues 25 to 28 (YGSQ), arginine 48, serine 51, serine 53, and 83 to 86 (DETQ) each bind NADP(+). The active site involves histidine 108. Glycine 134 contributes to the NADP(+) binding site. One can recognise a KARI C-terminal knotted domain in the interval 183-328 (TFKEETETDL…DQLREMMSWL (146 aa)). Residues aspartate 191, glutamate 195, glutamate 227, and glutamate 231 each contribute to the Mg(2+) site. Residue serine 252 coordinates substrate.

The protein belongs to the ketol-acid reductoisomerase family. The cofactor is Mg(2+).

The catalysed reaction is (2R)-2,3-dihydroxy-3-methylbutanoate + NADP(+) = (2S)-2-acetolactate + NADPH + H(+). It carries out the reaction (2R,3R)-2,3-dihydroxy-3-methylpentanoate + NADP(+) = (S)-2-ethyl-2-hydroxy-3-oxobutanoate + NADPH + H(+). It participates in amino-acid biosynthesis; L-isoleucine biosynthesis; L-isoleucine from 2-oxobutanoate: step 2/4. The protein operates within amino-acid biosynthesis; L-valine biosynthesis; L-valine from pyruvate: step 2/4. Involved in the biosynthesis of branched-chain amino acids (BCAA). Catalyzes an alkyl-migration followed by a ketol-acid reduction of (S)-2-acetolactate (S2AL) to yield (R)-2,3-dihydroxy-isovalerate. In the isomerase reaction, S2AL is rearranged via a Mg-dependent methyl migration to produce 3-hydroxy-3-methyl-2-ketobutyrate (HMKB). In the reductase reaction, this 2-ketoacid undergoes a metal-dependent reduction by NADPH to yield (R)-2,3-dihydroxy-isovalerate. The polypeptide is Ketol-acid reductoisomerase (NADP(+)) (Moorella thermoacetica (strain ATCC 39073 / JCM 9320)).